The primary structure comprises 265 residues: 3-methyl-2-oxobutanoate hydroxymethyltransferase (265 aa).

Residues aspartate 45 and aspartate 84 each contribute to the Mg(2+) site. 3-methyl-2-oxobutanoate contacts are provided by residues 45–46, aspartate 84, and lysine 112; that span reads DS. Glutamate 114 lines the Mg(2+) pocket. The active-site Proton acceptor is the glutamate 181.

The protein belongs to the PanB family. In terms of assembly, homodecamer; pentamer of dimers. Requires Mg(2+) as cofactor.

The protein localises to the cytoplasm. It carries out the reaction 3-methyl-2-oxobutanoate + (6R)-5,10-methylene-5,6,7,8-tetrahydrofolate + H2O = 2-dehydropantoate + (6S)-5,6,7,8-tetrahydrofolate. It participates in cofactor biosynthesis; (R)-pantothenate biosynthesis; (R)-pantoate from 3-methyl-2-oxobutanoate: step 1/2. Functionally, catalyzes the reversible reaction in which hydroxymethyl group from 5,10-methylenetetrahydrofolate is transferred onto alpha-ketoisovalerate to form ketopantoate. This chain is 3-methyl-2-oxobutanoate hydroxymethyltransferase, found in Yersinia pestis bv. Antiqua (strain Antiqua).